Here is a 941-residue protein sequence, read N- to C-terminus: ATP-dependent 6-phosphofructokinase subunit beta (941 aa).

Residues 2–558 (PDASLFNGTS…HMKNFISTNS (557 aa)) form an N-terminal catalytic PFK domain 1 region. ATP-binding positions include Gly-191, 255-256 (RC), and 285-288 (GDGS). Asp-286 contacts Mg(2+). Beta-D-fructose 6-phosphate contacts are provided by residues 331-333 (SID), Arg-368, and 375-377 (MGR). Asp-333 (proton acceptor) is an active-site residue. ATP is bound by residues Ile-395, 400–405 (KPASSR), and Gln-410. Residues Glu-432, Arg-460, and 466 to 469 (HVQR) contribute to the beta-D-fructose 6-phosphate site. Position 557 to 558 (557 to 558 (NS)) interacts with ATP. The interdomain linker stretch occupies residues 559-572 (ADHVPPSLPLEKRK). The C-terminal regulatory PFK domain 2 stretch occupies residues 573 to 941 (KIAIINVGAP…SDMLSGRTSL (369 aa)). Beta-D-fructose 2,6-bisphosphate is bound by residues Arg-643, 701–705 (TISNN), Arg-739, 746–748 (QGG), Glu-806, Lys-832, 838–841 (HVQQ), and Arg-918.

This sequence belongs to the phosphofructokinase type A (PFKA) family. ATP-dependent PFK group I subfamily. Eukaryotic two domain clade 'E' sub-subfamily. As to quaternary structure, heterododecamer of 4 alpha, 4 beta and 4 gamma chains. Requires Mg(2+) as cofactor.

It is found in the cytoplasm. It catalyses the reaction beta-D-fructose 6-phosphate + ATP = beta-D-fructose 1,6-bisphosphate + ADP + H(+). It participates in carbohydrate degradation; glycolysis; D-glyceraldehyde 3-phosphate and glycerone phosphate from D-glucose: step 3/4. With respect to regulation, allosterically activated by ADP, AMP, or fructose 2,6-bisphosphate, and allosterically inhibited by ATP or citrate. Its function is as follows. Catalyzes the phosphorylation of D-fructose 6-phosphate to fructose 1,6-bisphosphate by ATP, the first committing step of glycolysis. In Komagataella pastoris (Yeast), this protein is ATP-dependent 6-phosphofructokinase subunit beta (PFK2).